Reading from the N-terminus, the 352-residue chain is MAVEALLLLSFGGPERPEDVMPFLENVTRGRGVPRARLEEVAQHYLHFGGVSPINALNRDIIAGVERELDEAGIDLPVYFGNRNWHPMVEDTVAEMARDGVTGALVFPTSAWGGYSGCRQYHEDIERARAAVGPAAPHLTKLRQYFDHPLLIEAFADAIRAALERLPADRRDRARLVFTAHSVPVAADAAAGPPADGGELYSRQVADAARLCAAATGFADHDLVWQSRSGPPQVPWLEPDIVDHLEDLAGRGVDAVVVCPVGFVSDHLEVIWDLDNEAKDKAAELGMAFARASTPGTDPRFPRLVVELMREHLDGLAPRRLGAEPGYGCTIDGMPCASGCCAPQRRPAAAGR.

The Fe-coproporphyrin III site is built by Ser-52 and Tyr-121. 2 residues coordinate Fe(2+): His-181 and Glu-269.

The protein belongs to the ferrochelatase family.

It localises to the cytoplasm. The enzyme catalyses Fe-coproporphyrin III + 2 H(+) = coproporphyrin III + Fe(2+). It functions in the pathway porphyrin-containing compound metabolism; protoheme biosynthesis. Functionally, involved in coproporphyrin-dependent heme b biosynthesis. Catalyzes the insertion of ferrous iron into coproporphyrin III to form Fe-coproporphyrin III. This is Coproporphyrin III ferrochelatase from Nocardia farcinica (strain IFM 10152).